The following is a 55-amino-acid chain: ATP synthase protein 8 (55 aa).

Residues 4–24 (LNPNPWFTILIFTWAVFLTIL) form a helical membrane-spanning segment.

The protein belongs to the ATPase protein 8 family. In terms of assembly, F-type ATPases have 2 components, CF(1) - the catalytic core - and CF(0) - the membrane proton channel.

Its subcellular location is the mitochondrion membrane. Functionally, mitochondrial membrane ATP synthase (F(1)F(0) ATP synthase or Complex V) produces ATP from ADP in the presence of a proton gradient across the membrane which is generated by electron transport complexes of the respiratory chain. F-type ATPases consist of two structural domains, F(1) - containing the extramembraneous catalytic core and F(0) - containing the membrane proton channel, linked together by a central stalk and a peripheral stalk. During catalysis, ATP synthesis in the catalytic domain of F(1) is coupled via a rotary mechanism of the central stalk subunits to proton translocation. Part of the complex F(0) domain. Minor subunit located with subunit a in the membrane. This chain is ATP synthase protein 8 (mt-atp8), found in Polypterus ornatipinnis (Ornate bichir).